Consider the following 130-residue polypeptide: Small ribosomal subunit protein uS9 (130 aa).

The tract at residues 111–130 (VERKKVGLRKARRRPQFSKR) is disordered. Positions 116–130 (VGLRKARRRPQFSKR) are enriched in basic residues.

This sequence belongs to the universal ribosomal protein uS9 family.

This Enterobacter sp. (strain 638) protein is Small ribosomal subunit protein uS9.